A 287-amino-acid polypeptide reads, in one-letter code: Nucleotide-binding protein Sfri_3380 (287 aa).

8 to 15 (GRSGSGKS) contributes to the ATP binding site. 56 to 59 (DVRN) lines the GTP pocket.

This sequence belongs to the RapZ-like family.

Displays ATPase and GTPase activities. This is Nucleotide-binding protein Sfri_3380 from Shewanella frigidimarina (strain NCIMB 400).